The sequence spans 131 residues: MAKANTAVRVRKKVRKSVSEGIVHVHASFNNTIITITDRQGNALSWATSGGAGFKGSRKSTPFAAQVAAEHAGKVAQEYGVKNLEVRIKGPGPGRESAVRALNSLGFKITSISDVTPVPHNGCRPPKKRRI.

Belongs to the universal ribosomal protein uS11 family. Part of the 30S ribosomal subunit. Interacts with proteins S7 and S18. Binds to IF-3.

Its function is as follows. Located on the platform of the 30S subunit, it bridges several disparate RNA helices of the 16S rRNA. Forms part of the Shine-Dalgarno cleft in the 70S ribosome. The protein is Small ribosomal subunit protein uS11 of Chromobacterium violaceum (strain ATCC 12472 / DSM 30191 / JCM 1249 / CCUG 213 / NBRC 12614 / NCIMB 9131 / NCTC 9757 / MK).